The following is a 308-amino-acid chain: C-4 methylsterol oxidase (308 aa).

A helical transmembrane segment spans residues 56 to 76 (LLFFLTHEIFYFGRCLPWAII). The Fatty acid hydroxylase domain maps to 145 to 282 (WAVFFVLEDT…FRWWDFILDT (138 aa)). Residues 160–164 (HRGLH) carry the Histidine box-1 motif. Residues 173 to 177 (HKQHH) carry the Histidine box-2 motif. The short motif at 257–263 (HHDEHHH) is the Histidine box-3 element.

This sequence belongs to the sterol desaturase family. It depends on Fe cation as a cofactor.

It is found in the endoplasmic reticulum membrane. The catalysed reaction is 4,4-dimethyl-5alpha-cholest-7-en-3beta-ol + 6 Fe(II)-[cytochrome b5] + 3 O2 + 5 H(+) = 4alpha-carboxy-4beta-methyl-5alpha-cholest-7-ene-3beta-ol + 6 Fe(III)-[cytochrome b5] + 4 H2O. The protein operates within steroid biosynthesis; zymosterol biosynthesis; zymosterol from lanosterol: step 3/6. C-4 methylsterol oxidase; part of the third module of ergosterol biosynthesis pathway that includes the late steps of the pathway. ERG25 is a catalytic component of the C-4 demethylation complex that catalyzes the conversion of 4,4-dimethylfecosterol into fecosterol via 4-methylfecosterol. Catalyzes the three-step monooxygenation required for the demethylation of 4,4-dimethyl and 4alpha-methylsterols. The third module or late pathway involves the ergosterol synthesis itself through consecutive reactions that mainly occur in the endoplasmic reticulum (ER) membrane. Firstly, the squalene synthase ERG9 catalyzes the condensation of 2 farnesyl pyrophosphate moieties to form squalene, which is the precursor of all steroids. Squalene synthase is crucial for balancing the incorporation of farnesyl diphosphate (FPP) into sterol and nonsterol isoprene synthesis. Secondly, the squalene epoxidase ERG1 catalyzes the stereospecific oxidation of squalene to (S)-2,3-epoxysqualene, which is considered to be a rate-limiting enzyme in steroid biosynthesis. Then, the lanosterol synthase ERG7 catalyzes the cyclization of (S)-2,3 oxidosqualene to lanosterol, a reaction that forms the sterol core. In the next steps, lanosterol is transformed to zymosterol through a complex process involving various demethylation, reduction and desaturation reactions. The lanosterol 14-alpha-demethylase ERG11 (also known as CYP51) catalyzes C14-demethylation of lanosterol to produce 4,4'-dimethyl cholesta-8,14,24-triene-3-beta-ol, which is critical for ergosterol biosynthesis. The C-14 reductase ERG24 reduces the C14=C15 double bond of 4,4-dimethyl-cholesta-8,14,24-trienol to produce 4,4-dimethyl-cholesta-8,24-dienol. 4,4-dimethyl-cholesta-8,24-dienol is substrate of the C-4 demethylation complex ERG25-ERG26-ERG27 in which ERG25 catalyzes the three-step monooxygenation required for the demethylation of 4,4-dimethyl and 4alpha-methylsterols, ERG26 catalyzes the oxidative decarboxylation that results in a reduction of the 3-beta-hydroxy group at the C-3 carbon to an oxo group, and ERG27 is responsible for the reduction of the keto group on the C-3. ERG28 has a role as a scaffold to help anchor ERG25, ERG26 and ERG27 to the endoplasmic reticulum and ERG29 regulates the activity of the iron-containing C4-methylsterol oxidase ERG25. Then, the sterol 24-C-methyltransferase ERG6 catalyzes the methyl transfer from S-adenosyl-methionine to the C-24 of zymosterol to form fecosterol. The C-8 sterol isomerase ERG2 catalyzes the reaction which results in unsaturation at C-7 in the B ring of sterols and thus converts fecosterol to episterol. The sterol-C5-desaturase ERG3 then catalyzes the introduction of a C-5 double bond in the B ring to produce 5-dehydroepisterol. The C-22 sterol desaturase ERG5 further converts 5-dehydroepisterol into ergosta-5,7,22,24(28)-tetraen-3beta-ol by forming the C-22(23) double bond in the sterol side chain. Finally, ergosta-5,7,22,24(28)-tetraen-3beta-ol is substrate of the C-24(28) sterol reductase ERG4 to produce ergosterol. The polypeptide is C-4 methylsterol oxidase (Candida albicans (strain SC5314 / ATCC MYA-2876) (Yeast)).